The following is a 284-amino-acid chain: D-tagatose-1,6-bisphosphate aldolase subunit GatY (284 aa).

Asp82 functions as the Proton donor in the catalytic mechanism. 2 residues coordinate Zn(2+): His83 and His180. Gly181 lines the dihydroxyacetone phosphate pocket. His208 contacts Zn(2+). Dihydroxyacetone phosphate-binding positions include 209–211 and 230–233; these read GAS and NVAT.

The protein belongs to the class II fructose-bisphosphate aldolase family. TagBP aldolase GatY subfamily. In terms of assembly, forms a complex with GatZ. Zn(2+) is required as a cofactor.

The catalysed reaction is D-tagatofuranose 1,6-bisphosphate = D-glyceraldehyde 3-phosphate + dihydroxyacetone phosphate. Its pathway is carbohydrate metabolism; D-tagatose 6-phosphate degradation; D-glyceraldehyde 3-phosphate and glycerone phosphate from D-tagatose 6-phosphate: step 2/2. Its function is as follows. Catalytic subunit of the tagatose-1,6-bisphosphate aldolase GatYZ, which catalyzes the reversible aldol condensation of dihydroxyacetone phosphate (DHAP or glycerone-phosphate) with glyceraldehyde 3-phosphate (G3P) to produce tagatose 1,6-bisphosphate (TBP). Requires GatZ subunit for full activity and stability. Is involved in the catabolism of galactitol. The protein is D-tagatose-1,6-bisphosphate aldolase subunit GatY of Klebsiella pneumoniae subsp. pneumoniae (strain ATCC 700721 / MGH 78578).